We begin with the raw amino-acid sequence, 644 residues long: Protein cueball (644 aa).

The first 26 residues, 1–26 (MIRIRFGMDVLLVLLLATCLLTPAHG), serve as a signal peptide directing secretion. The Extracellular segment spans residues 27 to 531 (TPLEWDFAVT…VCLTPRVWTS (505 aa)). 2 N-linked (GlcNAc...) asparagine glycosylation sites follow: Asn-82 and Asn-108. LDL-receptor class B repeat units follow at residues 121–166 (MNLF…DVCR), 167–211 (RKLY…DQLS), and 212–257 (DRLF…TNDA). 2 N-linked (GlcNAc...) asparagine glycosylation sites follow: Asn-175 and Asn-190. The interval 280 to 301 (TTTSKPEEEDSTDSTDFTDPEP) is disordered. The segment covering 286–301 (EEEDSTDSTDFTDPEP) has biased composition (acidic residues). N-linked (GlcNAc...) asparagine glycosylation occurs at Asn-313. EGF-like domains lie at 398-430 (EIRE…FTGE) and 433-471 (ELSV…ARCE). 5 disulfide bridges follow: Cys-402/Cys-411, Cys-406/Cys-421, Cys-437/Cys-447, Cys-441/Cys-459, and Cys-461/Cys-470. Asn-473 and Asn-508 each carry an N-linked (GlcNAc...) asparagine glycan. Residues 532-552 (SVIIILVVGIVSSLLLVAVIV) traverse the membrane as a helical segment. Topologically, residues 553 to 644 (HGIRRLYKPK…LIHNMEDDLY (92 aa)) are cytoplasmic.

It belongs to the cueball family.

Its subcellular location is the cell membrane. Has a role in spermatogenesis and oogenesis. The chain is Protein cueball from Drosophila sechellia (Fruit fly).